Consider the following 423-residue polypeptide: SH2 domain-containing adapter protein F (423 aa).

3 disordered regions span residues 1–87, 110–208, and 225–312; these read MQQE…STTR, DPFD…WEWK, and DLPW…GEWT. Positions 192-203 are enriched in acidic residues; it reads EDDERPPEEYDQ. The residue at position 201 (Tyr201) is a Phosphotyrosine. The 96-residue stretch at 323-418 folds into the SH2 domain; it reads WYHGAISRTD…AEHMSLLYPV (96 aa).

As to quaternary structure, interacts with phosphorylated 'Tyr-720' of PDGFRA via its SH2 domain. Post-translationally, may become phosphorylated upon binding to PDGFRA. In terms of tissue distribution, expressed in skeletal muscle, brain, liver, prostate, testis, ovary, small intestine and colon.

In terms of biological role, adapter protein which may play a role in the regulation of apoptosis in response to PDGF. The sequence is that of SH2 domain-containing adapter protein F from Homo sapiens (Human).